A 550-amino-acid chain; its full sequence is Glucose import ATP-binding protein TsgD13 (550 aa).

2 ABC transporter domains span residues 7–270 and 287–533; these read LRME…VGRE and LRAR…TGGG. 39-46 serves as a coordination point for ATP; it reads GENGAGKS. Positions 529–550 are disordered; it reads MTGGGDATATAGAQVRGLGGSS.

This sequence belongs to the ABC transporter superfamily. The complex is composed of two ATP-binding proteins (TsgD13), two transmembrane proteins (TsgB13 and TsgC13) and a solute-binding protein (TsgA13).

The protein resides in the cell membrane. The enzyme catalyses D-glucose(out) + ATP + H2O = D-glucose(in) + ADP + phosphate + H(+). Functionally, part of an ABC transporter complex involved in glucose import. Responsible for energy coupling to the transport system. This is Glucose import ATP-binding protein TsgD13 (tsgD13) from Haloferax volcanii (strain ATCC 29605 / DSM 3757 / JCM 8879 / NBRC 14742 / NCIMB 2012 / VKM B-1768 / DS2) (Halobacterium volcanii).